A 707-amino-acid chain; its full sequence is DNA topoisomerase 1 (707 aa).

The 140-residue stretch at 1–140 folds into the Toprim domain; that stretch reads MYAILAEKPS…IKRLWTSSMT (140 aa). A Topo IA-type catalytic domain is found at 157–596; sequence TLPLYYQAKA…HSKKLSSVLF (440 aa). The interval 199–204 is interaction with DNA; sequence SLGRVQ. Tyr323 acts as the O-(5'-phospho-DNA)-tyrosine intermediate in catalysis.

The protein belongs to the type IA topoisomerase family. In terms of assembly, monomer.

The enzyme catalyses ATP-independent breakage of single-stranded DNA, followed by passage and rejoining.. Releases the supercoiling and torsional tension of DNA, which is introduced during the DNA replication and transcription, by transiently cleaving and rejoining one strand of the DNA duplex. Introduces a single-strand break via transesterification at a target site in duplex DNA. The scissile phosphodiester is attacked by the catalytic tyrosine of the enzyme, resulting in the formation of a DNA-(5'-phosphotyrosyl)-enzyme intermediate and the expulsion of a 3'-OH DNA strand. The free DNA strand then undergoes passage around the unbroken strand, thus removing DNA supercoils. Finally, in the religation step, the DNA 3'-OH attacks the covalent intermediate to expel the active-site tyrosine and restore the DNA phosphodiester backbone. The polypeptide is DNA topoisomerase 1 (topA) (Alkalihalophilus pseudofirmus (strain ATCC BAA-2126 / JCM 17055 / OF4) (Bacillus pseudofirmus)).